The following is a 382-amino-acid chain: Acetylxylan esterase A (382 aa).

The signal sequence occupies residues 1–21; that stretch reads MKSLSFSFLVTLFLYLTLSSA. Residues 22-31 constitute a propeptide that is removed on maturation; that stretch reads RTLGKDVNKR. Residues 35 to 307 are catalytic; the sequence is GSLQQVTGFG…GAKDMEWFGF (273 aa). N-linked (GlcNAc...) asparagine glycosylation occurs at Asn46. The Charge relay system role is filled by Ser152. Asn194 is a glycosylation site (N-linked (GlcNAc...) asparagine). Positions 308–345 are ser/Thr-rich linker; sequence SGSGSSSTTTASATKTSTTSTTSTKTTSSTSSTTTSST. The segment covering 313–345 has biased composition (low complexity); it reads SSTTTASATKTSTTSTTSTKTTSSTSSTTTSST. Residues 313–346 form a disordered region; that stretch reads SSTTTASATKTSTTSTTSTKTTSSTSSTTTSSTG. The CBM1 domain maps to 346-382; sequence GVAAHWGQCGGSGWTGPTVCESGYTCTYSNAWYSQCL.

It belongs to the carbohydrate esterase 1 (CE1) family. AxeA subfamily. As to quaternary structure, monomer. Post-translationally, glycosylated.

It localises to the secreted. It catalyses the reaction Deacetylation of xylans and xylo-oligosaccharides.. It participates in glycan degradation; xylan degradation. Inactivated by phenylmethylsulfonylfluorid (PMSF), a specific inhibitor of serine esterases. Functionally, acetylxylan esterase involved in the hydrolysis of xylan, a major structural heterogeneous polysaccharide found in plant biomass representing the second most abundant polysaccharide in the biosphere, after cellulose. Degrades acetylated xylans by cleaving acetyl side groups from the hetero-xylan backbone. This chain is Acetylxylan esterase A (axeA), found in Talaromyces purpureogenus (Soft rot fungus).